Consider the following 182-residue polypeptide: Keratin, type II cytoskeletal 60 kDa, component III (182 aa).

The IF rod domain maps to glutamate 1 to leucine 63. The interval glutamate 1 to leucine 63 is coil 2. Residues leucine 63–serine 182 are tail. Residues phenylalanine 157–serine 182 are disordered. The segment covering serine 164–serine 182 has biased composition (low complexity).

The protein belongs to the intermediate filament family. Heterotetramer of two type I and two type II keratins.

This is Keratin, type II cytoskeletal 60 kDa, component III from Bos taurus (Bovine).